Reading from the N-terminus, the 283-residue chain is Release factor glutamine methyltransferase (283 aa).

S-adenosyl-L-methionine is bound by residues 121–125, D144, and N188; that span reads GTGSG. Position 188–191 (188–191) interacts with substrate; it reads NPPY.

This sequence belongs to the protein N5-glutamine methyltransferase family. PrmC subfamily.

The enzyme catalyses L-glutaminyl-[peptide chain release factor] + S-adenosyl-L-methionine = N(5)-methyl-L-glutaminyl-[peptide chain release factor] + S-adenosyl-L-homocysteine + H(+). In terms of biological role, methylates the class 1 translation termination release factors RF1/PrfA and RF2/PrfB on the glutamine residue of the universally conserved GGQ motif. The chain is Release factor glutamine methyltransferase from Bacillus anthracis.